Reading from the N-terminus, the 245-residue chain is tRNA pseudouridine synthase A (245 aa).

Asp-52 serves as the catalytic Nucleophile. Tyr-111 is a substrate binding site.

It belongs to the tRNA pseudouridine synthase TruA family. As to quaternary structure, homodimer.

The enzyme catalyses uridine(38/39/40) in tRNA = pseudouridine(38/39/40) in tRNA. Functionally, formation of pseudouridine at positions 38, 39 and 40 in the anticodon stem and loop of transfer RNAs. This chain is tRNA pseudouridine synthase A, found in Thermotoga maritima (strain ATCC 43589 / DSM 3109 / JCM 10099 / NBRC 100826 / MSB8).